Consider the following 329-residue polypeptide: Arylacetonitrilase (329 aa).

The CN hydrolase domain maps to 6–279; sequence VRVAVTQAEP…EGIVYANLDM (274 aa). The Proton acceptor role is filled by Glu-46. The active site involves Lys-126. Cys-161 (nucleophile) is an active-site residue.

This sequence belongs to the carbon-nitrogen hydrolase superfamily. Nitrilase family.

It catalyses the reaction a nitrile + 2 H2O = a carboxylate + NH4(+). The catalysed reaction is 4-chlorophenylacetonitrile + 2 H2O = 4-chlorophenylacetate + NH4(+). Nitrilase that hydrolyzes preferentially phenylacetonitrile and heteroaromatic nitriles, but has significantly lower activity for (R,S)-mandelonitrile. Also acts on dinitriles like phenylenediacetonitriles (PDAs) 1,2-PDA, 1,3-PDA, and 1,4-PDA, and cyanophenyl acetonitriles (CPAs) 2-CPA and 4-CPA. The chain is Arylacetonitrilase from Hypocrea virens (strain Gv29-8 / FGSC 10586) (Gliocladium virens).